Here is a 525-residue protein sequence, read N- to C-terminus: MSTNISNKNSMSTSGSNNNTNNNNNSGCSSSNSSQRHNSIVELLSTPPQLPHQHHFNKSRQNSNLNESMSDSGESGLRRVDSYSSNDSISILSINSAHNHTDVGDVIINNELTASTTASTVGSGNSNQLTQTTSQCISSTHSQKWQHIQLTQLIEQNKLITVQGSISIEEAFNTLMKYHLTSLPVESYPGDMNCFTFDYNDLNSYLLLVLNKITVNNREITQDCQNGKPVPVGEIIKLTPKNPFYKLPETENLSTVLGILGSGVHRVAITNTEMTKIKGILSQRRLIKYLWDNARSFPSLEPLFNSSLQELQIGVLNTHSKPTSKQSRVISIQGEEPLINALYKIHEERISSIAVVDHQNNLIGNISVTDVKYVTRTSQYPLLHNTCRHFISVILNTRGLEMGKDSFPIFHVYPTSSLARTLAKLVATKSHRLWIVQPPEPSDINTGNTSNPASSHSPMMTAVDHSPSQTPNVSPTNLFEKEYRTGKLIGVISLTDILSVLARKQTDNKQVDPLSARRQRGSVSM.

The segment covering 1–34 (MSTNISNKNSMSTSGSNNNTNNNNNSGCSSSNSS) has biased composition (low complexity). Residues 1-81 (MSTNISNKNS…SGESGLRRVD (81 aa)) are disordered. Polar residues predominate over residues 59–73 (SRQNSNLNESMSDSG). 4 consecutive CBS domains span residues 154 to 215 (IEQN…KITV), 238 to 296 (LTPK…NARS), 323 to 382 (TSKQ…QYPL), and 439 to 508 (PEPS…QTDN). The interval 438 to 475 (PPEPSDINTGNTSNPASSHSPMMTAVDHSPSQTPNVSP) is disordered. Polar residues-rich tracts occupy residues 443–458 (DINT…SHSP) and 466–475 (SPSQTPNVSP).

Belongs to the SDS23 family.

It localises to the cytoplasm. It is found in the nucleus. Involved in DNA replication and cell separation. The sequence is that of Protein SDS23 (SDS23) from Vanderwaltozyma polyspora (strain ATCC 22028 / DSM 70294 / BCRC 21397 / CBS 2163 / NBRC 10782 / NRRL Y-8283 / UCD 57-17) (Kluyveromyces polysporus).